Here is a 168-residue protein sequence, read N- to C-terminus: Dihydrofolate reductase (168 aa).

Positions 1-164 constitute a DHFR domain; that stretch reads MIIGIWAEDE…YTFTIKKYEK (164 aa). A substrate-binding site is contributed by 5 to 7; sequence IWA. NADP(+) is bound by residues 6–7 and 14–19; these read WA and IGEADK. Residue glutamate 27 participates in substrate binding. Residue 43 to 46 participates in NADP(+) binding; it reads GRKT. Arginine 58 is a binding site for substrate. NADP(+)-binding positions include 63-66 and 99-104; these read LTRD and TGGAEI. Substrate is bound at residue threonine 118.

The protein belongs to the dihydrofolate reductase family.

It catalyses the reaction (6S)-5,6,7,8-tetrahydrofolate + NADP(+) = 7,8-dihydrofolate + NADPH + H(+). It functions in the pathway cofactor biosynthesis; tetrahydrofolate biosynthesis; 5,6,7,8-tetrahydrofolate from 7,8-dihydrofolate: step 1/1. Key enzyme in folate metabolism. Catalyzes an essential reaction for de novo glycine and purine synthesis, and for DNA precursor synthesis. The polypeptide is Dihydrofolate reductase (folA) (Lactococcus lactis subsp. lactis (strain IL1403) (Streptococcus lactis)).